We begin with the raw amino-acid sequence, 227 residues long: NAD(P)H-quinone oxidoreductase subunit K, chloroplastic (227 aa).

Residues Cys43, Cys44, Cys108, and Cys139 each contribute to the [4Fe-4S] cluster site.

Belongs to the complex I 20 kDa subunit family. NDH is composed of at least 16 different subunits, 5 of which are encoded in the nucleus. The cofactor is [4Fe-4S] cluster.

It localises to the plastid. The protein resides in the chloroplast thylakoid membrane. It carries out the reaction a plastoquinone + NADH + (n+1) H(+)(in) = a plastoquinol + NAD(+) + n H(+)(out). It catalyses the reaction a plastoquinone + NADPH + (n+1) H(+)(in) = a plastoquinol + NADP(+) + n H(+)(out). NDH shuttles electrons from NAD(P)H:plastoquinone, via FMN and iron-sulfur (Fe-S) centers, to quinones in the photosynthetic chain and possibly in a chloroplast respiratory chain. The immediate electron acceptor for the enzyme in this species is believed to be plastoquinone. Couples the redox reaction to proton translocation, and thus conserves the redox energy in a proton gradient. The protein is NAD(P)H-quinone oxidoreductase subunit K, chloroplastic of Ranunculus macranthus (Large buttercup).